The chain runs to 315 residues: Capsid protein (315 aa).

Residues 1–60 (MPPKPAPGDNEGNASGSTPTPPPPPPARTAEEARLRLAEMEREREQEQLLEEMNSNTPAE) are disordered. Over residues 29-47 (TAEEARLRLAEMEREREQE) the composition is skewed to basic and acidic residues.

The protein belongs to the potexviruses coat protein family.

It is found in the virion. Functionally, required for genome encapsidation. Forms ribonucleoprotein complexes along with TGB1 helicase and viral RNA. This is Capsid protein from Chrysanthemum morifolium (Florist's daisy).